Reading from the N-terminus, the 338-residue chain is Phosphate acyltransferase (338 aa).

Belongs to the PlsX family. Homodimer. Probably interacts with PlsY.

It localises to the cytoplasm. The enzyme catalyses a fatty acyl-[ACP] + phosphate = an acyl phosphate + holo-[ACP]. Its pathway is lipid metabolism; phospholipid metabolism. Functionally, catalyzes the reversible formation of acyl-phosphate (acyl-PO(4)) from acyl-[acyl-carrier-protein] (acyl-ACP). This enzyme utilizes acyl-ACP as fatty acyl donor, but not acyl-CoA. This chain is Phosphate acyltransferase, found in Alcanivorax borkumensis (strain ATCC 700651 / DSM 11573 / NCIMB 13689 / SK2).